Reading from the N-terminus, the 125-residue chain is Ribonuclease P protein component (125 aa).

It belongs to the RnpA family. Consists of a catalytic RNA component (M1 or rnpB) and a protein subunit.

It carries out the reaction Endonucleolytic cleavage of RNA, removing 5'-extranucleotides from tRNA precursor.. In terms of biological role, RNaseP catalyzes the removal of the 5'-leader sequence from pre-tRNA to produce the mature 5'-terminus. It can also cleave other RNA substrates such as 4.5S RNA. The protein component plays an auxiliary but essential role in vivo by binding to the 5'-leader sequence and broadening the substrate specificity of the ribozyme. This is Ribonuclease P protein component from Clostridium perfringens (strain ATCC 13124 / DSM 756 / JCM 1290 / NCIMB 6125 / NCTC 8237 / Type A).